We begin with the raw amino-acid sequence, 240 residues long: Lactate utilization protein C (240 aa).

This sequence belongs to the LutC/YkgG family.

Functionally, is involved in L-lactate degradation and allows cells to grow with lactate as the sole carbon source. The chain is Lactate utilization protein C from Bacillus licheniformis (strain ATCC 14580 / DSM 13 / JCM 2505 / CCUG 7422 / NBRC 12200 / NCIMB 9375 / NCTC 10341 / NRRL NRS-1264 / Gibson 46).